Consider the following 889-residue polypeptide: Disease resistance protein UNI (889 aa).

Residues 19 to 64 (NCLIGKSYIRTLEKNLRALQREMEDLRAIQHEVQNKVARDEARHQR) are a coiled coil. The segment at 131-152 (GNFDEVSQPPPRSEVEERPTQP) is disordered. The NB-ARC domain maps to 137-440 (SQPPPRSEVE…CEGFIGEDQV (304 aa)). ATP is bound at residue 179-186 (GMGGVGKT). 9 LRR repeats span residues 510 to 532 (WGAV…ESKC), 533 to 555 (SELT…FIRY), 557 to 580 (QKLV…ISGL), 581 to 603 (VSLQ…LKEL), 604 to 625 (KKLT…GISR), 626 to 652 (LLSL…LQQL), 653 to 676 (QNLQ…LAKL), 698 to 721 (MENL…ESET), and 825 to 848 (CPKL…EIHM).

This sequence belongs to the disease resistance NB-LRR family. As to quaternary structure, interacts with RPT2A.

In terms of biological role, involved in disease resistance via the salicylic acid (SA) signaling pathway. Involved in shoot architecture development via the cytokinin signaling pathway. The chain is Disease resistance protein UNI from Arabidopsis thaliana (Mouse-ear cress).